The chain runs to 379 residues: Sialidase-2 (379 aa).

The FRIP motif motif lies at Tyr20–Pro23. Substrate-binding residues include Arg21 and Arg41. Asp46 functions as the Proton acceptor in the catalytic mechanism. Residues Ile127–Ala138 form a BNR 1 repeat. Residues Tyr179 and Tyr181 each coordinate substrate. The BNR 2 repeat unit spans residues Phe197–Leu208. The substrate site is built by Glu218, Arg237, and Arg303. Tyr333 (nucleophile) is an active-site residue. Glu354 is an active-site residue.

It belongs to the glycosyl hydrolase 33 family.

It localises to the cytoplasm. It catalyses the reaction Hydrolysis of alpha-(2-&gt;3)-, alpha-(2-&gt;6)-, alpha-(2-&gt;8)- glycosidic linkages of terminal sialic acid residues in oligosaccharides, glycoproteins, glycolipids, colominic acid and synthetic substrates.. Its function is as follows. Catalyzes the removal of sialic acid (N-acetylneuraminic acid) moieties from glycoproteins, oligosaccharides and gangliosides. This Cricetulus griseus (Chinese hamster) protein is Sialidase-2 (NEU2).